A 368-amino-acid polypeptide reads, in one-letter code: Agmatine deiminase (368 aa).

The Amidino-cysteine intermediate role is filled by Cys357.

This sequence belongs to the agmatine deiminase family. Homodimer.

The catalysed reaction is agmatine + H2O = N-carbamoylputrescine + NH4(+). The protein operates within amine and polyamine biosynthesis; putrescine biosynthesis via agmatine pathway; N-carbamoylputrescine from agmatine: step 1/1. Its function is as follows. Mediates the hydrolysis of agmatine into N-carbamoylputrescine in the arginine decarboxylase (ADC) pathway of putrescine biosynthesis, a basic polyamine. The chain is Agmatine deiminase from Pseudomonas aeruginosa (strain UCBPP-PA14).